The primary structure comprises 160 residues: Ribosome maturation factor RimP (160 aa).

The protein belongs to the RimP family.

It is found in the cytoplasm. Functionally, required for maturation of 30S ribosomal subunits. This Syntrophus aciditrophicus (strain SB) protein is Ribosome maturation factor RimP.